A 334-amino-acid polypeptide reads, in one-letter code: Pantothenate synthetase (334 aa).

Residue 34-41 (MGALHEGH) coordinates ATP. The Proton donor role is filled by His41. Gln71 lines the (R)-pantoate pocket. Gln71 provides a ligand contact to beta-alanine. An ATP-binding site is contributed by 158 to 161 (GQKD). Gln164 is a (R)-pantoate binding site. Residues Val187 and 195–198 (LSSR) contribute to the ATP site. The tract at residues 288-334 (PLMLGTRGPAGEASPPNRERSEPGSAEQNKSPGEARTTPSGTSEASE) is disordered. A compositionally biased stretch (polar residues) spans 313–334 (AEQNKSPGEARTTPSGTSEASE).

This sequence belongs to the pantothenate synthetase family. As to quaternary structure, homodimer.

Its subcellular location is the cytoplasm. It catalyses the reaction (R)-pantoate + beta-alanine + ATP = (R)-pantothenate + AMP + diphosphate + H(+). Its pathway is cofactor biosynthesis; (R)-pantothenate biosynthesis; (R)-pantothenate from (R)-pantoate and beta-alanine: step 1/1. Functionally, catalyzes the condensation of pantoate with beta-alanine in an ATP-dependent reaction via a pantoyl-adenylate intermediate. The sequence is that of Pantothenate synthetase from Nocardioides sp. (strain ATCC BAA-499 / JS614).